Consider the following 432-residue polypeptide: Monooxygenase penA (432 aa).

A helical membrane pass occupies residues 7-29 (FKIAIIGAGPAGLTLASLLTASP). N-linked (GlcNAc...) asparagine glycosylation occurs at asparagine 33.

It belongs to the aromatic-ring hydroxylase family. FAD serves as cofactor.

It is found in the membrane. The protein operates within secondary metabolite biosynthesis. It participates in alkaloid biosynthesis. Its pathway is mycotoxin biosynthesis. Functionally, monooxygenase; part of the gene cluster that mediates the biosynthesis of penigequinolones, potent insecticidal alkaloids that contain a highly modified 10-carbon prenyl group. The first stage is catalyzed by the nonribosomal peptide synthetase penN that condenses anthranilic acid and O-methyl-L-tyrosine to produce 4'-methoxycyclopeptin. 4'-methoxycyclopeptin is then converted to 4'-methoxydehydrocyclopeptin by the ketoglutarate-dependent dioxygenase penM through dehydrogenation to form a double bond between C-alpha and C-beta of the O-methyltyrosine side chain. PenM also converts its first product methoxydehydrocyclopeptin to 4'-methoxycyclopenin. The following conversion of 4'methoxycyclopenin into 4'-methoxyviridicatin is catalyzed by the cyclopenase penL. 4'-methoxyviridicatin is the precursor of quinolone natural products, and is further converted to quinolinone B. The prenyltransferase penI then catalyzes the canonical Friedel-Crafts alkylation of quinolinone B with dimethylallyl cation to yield dimethylallyl quinolone, which is subjected to FAD-dependent dehydrogenation by the FAD-linked oxidoreductase penH to yield conjugated aryl diene. The delta(3') double bond then serves as the site of the second alkylation with DMAPP catalyzed by the prenyltransferase penG to yield a carbenium ion intermediate, which can be attacked by H(2)O to yield a styrenyl quinolone containing a C3'-hydroxyprenyl chain, or undergo cyclization to yield yaequinolones J1 and J2. The conversion of the styrenyl quinolone into the tetrahydrofuran-containing yaequinolone C is performed by the FAD-dependent monooxygenase penE and involves epoxidation of the terminal C7'-C8' olefin, followed by epoxide ring opening initiated by the C3' hydroxyl group. The predicted cysteine hydrolase penJ acts as an epoxide hydrolase that enhances the rate of the 5-exo-tet cyclization step, increasing the yield of yaequinolone C. PenF catalyzes the cationic rearrangement of the epoxide formed by penE (before ring opening to produce yaequinolone C) into yaequinolone D. Finally, the short-chain dehydrogenase/reductase (SDR)-like reductase penD, catalyzes both the dehydration of yaequinolone D and the reduction of the resulting oxonium to yield penigequinolone. This Penicillium thymicola protein is Monooxygenase penA.